The sequence spans 128 residues: Large ribosomal subunit protein eL32 (128 aa).

This sequence belongs to the eukaryotic ribosomal protein eL32 family.

This Thermoplasma volcanium (strain ATCC 51530 / DSM 4299 / JCM 9571 / NBRC 15438 / GSS1) protein is Large ribosomal subunit protein eL32 (rpl32e).